The following is a 78-amino-acid chain: MASLIQVRDLLALRGRMEAAQISQTLNTPQPMINAMLKQLESMGKAVRIQEEPDGCLSGSCKSCPEGKACLHEWWALR.

Residues cysteine 56, cysteine 61, cysteine 64, and cysteine 70 each coordinate iron-sulfur cluster.

Belongs to the FeoC family.

Functionally, may function as a transcriptional regulator that controls feoABC expression. The sequence is that of Probable [Fe-S]-dependent transcriptional repressor from Escherichia coli (strain UTI89 / UPEC).